A 147-amino-acid polypeptide reads, in one-letter code: Allograft inflammatory factor 1 (147 aa).

Residue Ser-2 is modified to N-acetylserine. Lys-11 is modified (N6-acetyllysine). Ser-39 carries the phosphoserine modification. The EF-hand 1 domain occupies 45–80; sequence SKLEAFKKKYMEFDLNEDGGIDIMSLKRMMEKLGVP. Asp-58, Asn-60, and Asp-62 together coordinate Ca(2+). The 35-residue stretch at 81–115 folds into the EF-hand 2; degenerate domain; the sequence is KTHLELKKLIMEVSSGPGETFSYSDFLKMMLGKRS. The segment at 128-147 is disordered; it reads AREQEKPTGLPAKKAISELP.

Post-translationally, phosphorylated on serine residues.

It is found in the cytoplasm. The protein localises to the cytoskeleton. Its subcellular location is the cell projection. The protein resides in the ruffle membrane. It localises to the phagocytic cup. Functionally, may play a role in macrophage activation and function. This Bos taurus (Bovine) protein is Allograft inflammatory factor 1 (AIF1).